A 352-amino-acid chain; its full sequence is Anthranilate phosphoribosyltransferase (352 aa).

5-phospho-alpha-D-ribose 1-diphosphate is bound by residues glycine 91, 94 to 95, threonine 99, 101 to 104, 119 to 127, and serine 131; these read GD, NIST, and KHGNRASSS. An anthranilate-binding site is contributed by glycine 91. Position 103 (serine 103) interacts with Mg(2+). Asparagine 122 is an anthranilate binding site. Position 177 (arginine 177) interacts with anthranilate. Aspartate 235 and glutamate 236 together coordinate Mg(2+).

It belongs to the anthranilate phosphoribosyltransferase family. In terms of assembly, homodimer. The cofactor is Mg(2+).

It carries out the reaction N-(5-phospho-beta-D-ribosyl)anthranilate + diphosphate = 5-phospho-alpha-D-ribose 1-diphosphate + anthranilate. It participates in amino-acid biosynthesis; L-tryptophan biosynthesis; L-tryptophan from chorismate: step 2/5. Functionally, catalyzes the transfer of the phosphoribosyl group of 5-phosphorylribose-1-pyrophosphate (PRPP) to anthranilate to yield N-(5'-phosphoribosyl)-anthranilate (PRA). This chain is Anthranilate phosphoribosyltransferase, found in Arthrobacter sp. (strain FB24).